A 268-amino-acid chain; its full sequence is MSAGKVSIRDFLKKKGKEKITMLTAYDYPTAKIMSMTNLDGILVGDSLSMVVLGYENTLKVSMKEMLVHLDSVVRAKPRQLVVADMPFLSYEVSANTAVKNAGLFVRHGADSVKLEGGEEMADVVRKIVRAGIPVMGHIGLTPQRFLRIGGFRVLGKSKHEEEQLLRDAEVLEEAGIFSLVIENTYADVAKKITEKLKVPTICIGAGPYCDGQILVIHDVLGLSEFTPYFAKAYVNLKEEIQKAVNKYVEEVRESKFPQGENYKERES.

2 residues coordinate Mg(2+): aspartate 46 and aspartate 85. 3-methyl-2-oxobutanoate is bound by residues 46–47 (DS), aspartate 85, and lysine 114. Glutamate 116 is a binding site for Mg(2+). The active-site Proton acceptor is the glutamate 183.

The protein belongs to the PanB family. As to quaternary structure, homodecamer; pentamer of dimers. The cofactor is Mg(2+).

The protein resides in the cytoplasm. The enzyme catalyses 3-methyl-2-oxobutanoate + (6R)-5,10-methylene-5,6,7,8-tetrahydrofolate + H2O = 2-dehydropantoate + (6S)-5,6,7,8-tetrahydrofolate. Its pathway is cofactor biosynthesis; coenzyme A biosynthesis. Catalyzes the reversible reaction in which hydroxymethyl group from 5,10-methylenetetrahydrofolate is transferred onto alpha-ketoisovalerate to form ketopantoate. This Sulfolobus acidocaldarius (strain ATCC 33909 / DSM 639 / JCM 8929 / NBRC 15157 / NCIMB 11770) protein is 3-methyl-2-oxobutanoate hydroxymethyltransferase.